Reading from the N-terminus, the 358-residue chain is Peptide chain release factor 1 (358 aa).

At glutamine 233 the chain carries N5-methylglutamine. A compositionally biased stretch (basic and acidic residues) spans 282 to 306 (QRAASERSADRRGQVGSGDRSERVR). A disordered region spans residues 282–308 (QRAASERSADRRGQVGSGDRSERVRTY).

It belongs to the prokaryotic/mitochondrial release factor family. Methylated by PrmC. Methylation increases the termination efficiency of RF1.

The protein resides in the cytoplasm. Functionally, peptide chain release factor 1 directs the termination of translation in response to the peptide chain termination codons UAG and UAA. This is Peptide chain release factor 1 from Afipia carboxidovorans (strain ATCC 49405 / DSM 1227 / KCTC 32145 / OM5) (Oligotropha carboxidovorans).